We begin with the raw amino-acid sequence, 385 residues long: uncharacterized protein (385 aa).

The next 9 membrane-spanning stretches (helical) occupy residues 12-32, 50-70, 90-110, 132-152, 195-215, 233-253, 272-292, 312-332, and 335-355; these read GVAI…PKAA, WAFL…LLFG, LLVL…ILLA, FNTG…LGLI, LALG…GAAL, TGFV…ALQW, LSAP…WPQL, YLLQ…FMHF, and LELL…SVIW.

This sequence to B.subtilis YxaH and YrkO.

It localises to the cell membrane. Its function is as follows. Involved in transport. This is an uncharacterized protein from Escherichia coli (strain K12).